Here is a 362-residue protein sequence, read N- to C-terminus: MPAVPADRPMHAVRIWLAIIAGLIAVMVLVGGATRLTESGLSIVEWKPITGTLPPLSVEQWTQAFDAYKTIPQYRELNAGMTLAQFKTIFWWEWSHRLLGRVIGAAFLLPFLWFLWRGDLGGGLKRRLWIIFGLGALQGAVGWWMVASGLSQRVEVSQVRLATHLVLALLIFAGIVWTLRQLTPRPAIVAPLRLRLTAAVLLGLTFVQLYLGALVAGLRAGRIYNTWPQIDGALIPSAARLWFEQPWWKNLFDNHLTVQFDHRMLAYALWALAVLHAIDAWRARAAAGGALALAVAITLQAALGIVTLLYAVPIGLGLAHQAMAILVLTLAVLQLARFSPGVVQTAQHAAAPSLGQPAQGRG.

5 helical membrane passes run 12-32 (AVRI…LVGG), 102-122 (VIGA…DLGG), 128-148 (LWII…MVAS), 159-179 (VRLA…VWTL), and 198-218 (AAVL…VAGL). H262 contributes to the heme binding site. 3 helical membrane-spanning segments follow: residues 264–281 (MLAY…IDAW), 289–309 (GALA…VTLL), and 312–332 (VPIG…TLAV). H320 serves as a coordination point for heme.

The protein belongs to the COX15/CtaA family. Type 2 subfamily. In terms of assembly, interacts with CtaB. Heme b serves as cofactor.

It localises to the cell membrane. The catalysed reaction is Fe(II)-heme o + 2 A + H2O = Fe(II)-heme a + 2 AH2. It participates in porphyrin-containing compound metabolism; heme A biosynthesis; heme A from heme O: step 1/1. Catalyzes the conversion of heme O to heme A by two successive hydroxylations of the methyl group at C8. The first hydroxylation forms heme I, the second hydroxylation results in an unstable dihydroxymethyl group, which spontaneously dehydrates, resulting in the formyl group of heme A. The chain is Heme A synthase from Rhodopseudomonas palustris (strain BisB18).